The sequence spans 166 residues: Large ribosomal subunit protein uL18c (166 aa).

A chloroplast-targeting transit peptide spans 1–44; the sequence is MAAATSLSFFHSTLASSSSSSVQQLSLPPKFVNFRPQTLPLIQA.

Belongs to the universal ribosomal protein uL18 family. As to quaternary structure, component of the chloroplast large ribosomal subunit (LSU). Mature 70S chloroplast ribosomes of higher plants consist of a small (30S) and a large (50S) subunit. The 30S small subunit contains 1 molecule of ribosomal RNA (16S rRNA) and 24 different proteins. The 50S large subunit contains 3 rRNA molecules (23S, 5S and 4.5S rRNA) and 33 different proteins.

Its subcellular location is the plastid. It localises to the chloroplast. Functionally, component of the chloroplast ribosome (chloro-ribosome), a dedicated translation machinery responsible for the synthesis of chloroplast genome-encoded proteins, including proteins of the transcription and translation machinery and components of the photosynthetic apparatus. This is Large ribosomal subunit protein uL18c (RPL18) from Spinacia oleracea (Spinach).